The sequence spans 138 residues: Outer membrane protein assembly factor BamE (138 aa).

An N-terminal signal peptide occupies residues 1-42 (MSHLTMIKTLNLRPFHSASALRKIVITSILGVAVTMSGCSLL).

The protein belongs to the BamE family. In terms of assembly, part of the Bam complex.

Its subcellular location is the cell outer membrane. Its function is as follows. Part of the outer membrane protein assembly complex, which is involved in assembly and insertion of beta-barrel proteins into the outer membrane. The polypeptide is Outer membrane protein assembly factor BamE (Psychrobacter arcticus (strain DSM 17307 / VKM B-2377 / 273-4)).